A 125-amino-acid polypeptide reads, in one-letter code: Large ribosomal subunit protein eL31 (125 aa).

The protein belongs to the eukaryotic ribosomal protein eL31 family. As to quaternary structure, component of the large ribosomal subunit.

It is found in the cytoplasm. In terms of biological role, component of the large ribosomal subunit. The ribosome is a large ribonucleoprotein complex responsible for the synthesis of proteins in the cell. The polypeptide is Large ribosomal subunit protein eL31 (rpl31) (Ictalurus punctatus (Channel catfish)).